The chain runs to 225 residues: ATP-dependent dethiobiotin synthetase BioD 1 (225 aa).

Position 13-18 (13-18 (EVGKTV)) interacts with ATP. Residue Thr-17 participates in Mg(2+) binding. The active site involves Lys-38. Ser-42 contributes to the substrate binding site. Residues Asp-55, 116 to 119 (EGAG), 176 to 177 (ND), 205 to 207 (PWL), and Glu-212 contribute to the ATP site. Mg(2+) contacts are provided by Asp-55 and Glu-116.

It belongs to the dethiobiotin synthetase family. In terms of assembly, homodimer. Mg(2+) is required as a cofactor.

The protein resides in the cytoplasm. The enzyme catalyses (7R,8S)-7,8-diammoniononanoate + CO2 + ATP = (4R,5S)-dethiobiotin + ADP + phosphate + 3 H(+). It functions in the pathway cofactor biosynthesis; biotin biosynthesis; biotin from 7,8-diaminononanoate: step 1/2. Its function is as follows. Catalyzes a mechanistically unusual reaction, the ATP-dependent insertion of CO2 between the N7 and N8 nitrogen atoms of 7,8-diaminopelargonic acid (DAPA, also called 7,8-diammoniononanoate) to form a ureido ring. This chain is ATP-dependent dethiobiotin synthetase BioD 1, found in Escherichia coli O157:H7.